The following is a 385-amino-acid chain: Cytochrome b (385 aa).

Over 1–27 (MRLLKSHPLLKLVNSYLIDASQPSNIS) the chain is Mitochondrial matrix. Tyr16 is an a ubiquinone binding site. A helical transmembrane segment spans residues 28–51 (YLWNFGSLLACCLIIQIVTGVTLA). At 52–74 (MHYSPNVLEAFNSIEHIMRDVNN) the chain is on the mitochondrial intermembrane side. A helical transmembrane segment spans residues 75 to 102 (GWLVRYLHSNTASAFFFLVYLHIGRGMY). Heme b is bound by residues His82 and His96. The Mitochondrial matrix portion of the chain corresponds to 103-110 (YGSYRAPR). The chain crosses the membrane as a helical span at residues 111 to 135 (TLVWAIGTVILILMMATAFLGYVLP). Residues 136–172 (YGQMSLWGATVITNLISAIPWIGQDIVEFIWGGFSVN) lie on the Mitochondrial intermembrane side of the membrane. The helical transmembrane segment at 173-205 (NATLNRFFALHFVLPFILAALVLMHLIALHDTA) threads the bilayer. The heme b site is built by His183 and His197. His202 is an a ubiquinone binding site. Topologically, residues 206–224 (GSSNPLGVSGNYDRITFAP) are mitochondrial matrix. Residues 225-247 (YYLFKDLITIFIFIYVLSSFVFF) form a helical membrane-spanning segment. Residues 248–288 (MPNVLGDSENYIMANPMQTPPAIVPEWYLLPFYAILRSIPN) lie on the Mitochondrial intermembrane side of the membrane. The helical transmembrane segment at 289–309 (KLLGVIAMFSAILAIMLLPIT) threads the bilayer. Over 310–320 (DLGRSKGLQFR) the chain is Mitochondrial matrix. Residues 321-341 (PLSKFAFWAFVVNFLILMKLG) traverse the membrane as a helical segment. Over 342-348 (ACHVESP) the chain is Mitochondrial intermembrane. A helical transmembrane segment spans residues 349 to 365 (FIELGQFSTIFYFSYFI). The Mitochondrial matrix segment spans residues 366–385 (FIVPVLSLIENTLVDLNYLK).

Belongs to the cytochrome b family. As to quaternary structure, component of the ubiquinol-cytochrome c oxidoreductase (cytochrome b-c1 complex, complex III, CIII), a multisubunit enzyme composed of 10 subunits. The complex is composed of 3 respiratory subunits cytochrome b (cob), cytochrome c1 (cyt-1) and Rieske protein (fes-1), 2 core protein subunits pep and ucr-1, and 5 low-molecular weight protein subunits qcr6, qcr7, qcr8, qcr9 and probably NCU16844/qcr10. The complex exists as an obligatory dimer and forms supercomplexes (SCs) in the inner mitochondrial membrane with NADH-ubiquinone oxidoreductase (complex I, CI) and cytochrome c oxidase (complex IV, CIV), resulting in different assemblies (supercomplexes SCI(1)III(2), SCIII(2)IV(1) and SCIII(2)IV(2) as well as higher order I(x)III(y)IV(z) megacomplexes). Requires heme b as cofactor.

It is found in the mitochondrion inner membrane. The enzyme catalyses a quinol + 2 Fe(III)-[cytochrome c](out) = a quinone + 2 Fe(II)-[cytochrome c](out) + 2 H(+)(out). Functionally, component of the ubiquinol-cytochrome c oxidoreductase, a multisubunit transmembrane complex that is part of the mitochondrial electron transport chain which drives oxidative phosphorylation. The respiratory chain contains 3 multisubunit complexes succinate dehydrogenase (complex II, CII), ubiquinol-cytochrome c oxidoreductase (cytochrome b-c1 complex, complex III, CIII) and cytochrome c oxidase (complex IV, CIV), that cooperate to transfer electrons derived from NADH and succinate to molecular oxygen, creating an electrochemical gradient over the inner membrane that drives transmembrane transport and the ATP synthase. The cytochrome b-c1 complex catalyzes electron transfer from ubiquinol to cytochrome c, linking this redox reaction to translocation of protons across the mitochondrial inner membrane, with protons being carried across the membrane as hydrogens on the quinol. In the process called Q cycle, 2 protons are consumed from the matrix, 4 protons are released into the intermembrane space and 2 electrons are passed to cytochrome c. Cytochrome b is a catalytic core subunit containing 2 b-type hemes BL and BH topographically segregated in the quinone reduction (Qi) and quinol oxidation (Q0) sites on opposite sides of the membrane. In Neurospora crassa (strain ATCC 24698 / 74-OR23-1A / CBS 708.71 / DSM 1257 / FGSC 987), this protein is Cytochrome b (cob).